We begin with the raw amino-acid sequence, 116 residues long: Large ribosomal subunit protein bL19 (116 aa).

This sequence belongs to the bacterial ribosomal protein bL19 family.

Its function is as follows. This protein is located at the 30S-50S ribosomal subunit interface and may play a role in the structure and function of the aminoacyl-tRNA binding site. The protein is Large ribosomal subunit protein bL19 of Solidesulfovibrio magneticus (strain ATCC 700980 / DSM 13731 / RS-1) (Desulfovibrio magneticus).